Consider the following 271-residue polypeptide: Beta-lactamase (271 aa).

Residue serine 46 is the Acyl-ester intermediate of the active site. Substrate is bound at residue 210 to 212 (KTG).

Belongs to the class-A beta-lactamase family. In terms of assembly, monomer.

It catalyses the reaction a beta-lactam + H2O = a substituted beta-amino acid. Its function is as follows. Hydrolyzes broad-spectrum beta-lactam antibiotics. Active against cephalosporins. The chain is Beta-lactamase from Proteus vulgaris.